Consider the following 616-residue polypeptide: UvrABC system protein C (616 aa).

The region spanning 12–97 is the GIY-YIG domain; the sequence is NDAGVYQYFD…IKQLKPKYNI (86 aa). The UVR domain maps to 203–238; the sequence is TKLISKLNEKMLQYSNDFRFEEAMTLRDRIKTIEKS.

It belongs to the UvrC family. In terms of assembly, interacts with UvrB in an incision complex.

The protein resides in the cytoplasm. Functionally, the UvrABC repair system catalyzes the recognition and processing of DNA lesions. UvrC both incises the 5' and 3' sides of the lesion. The N-terminal half is responsible for the 3' incision and the C-terminal half is responsible for the 5' incision. In Aliarcobacter butzleri (strain RM4018) (Arcobacter butzleri), this protein is UvrABC system protein C.